The sequence spans 231 residues: Flagellar L-ring protein (231 aa).

Positions 1-18 (MNRFICVLALSGSAVLAG) are cleaved as a signal peptide. A lipid anchor (N-palmitoyl cysteine) is attached at cysteine 19. A lipid anchor (S-diacylglycerol cysteine) is attached at cysteine 19.

It belongs to the FlgH family. In terms of assembly, the basal body constitutes a major portion of the flagellar organelle and consists of four rings (L,P,S, and M) mounted on a central rod.

Its subcellular location is the cell outer membrane. The protein localises to the bacterial flagellum basal body. Functionally, assembles around the rod to form the L-ring and probably protects the motor/basal body from shearing forces during rotation. This is Flagellar L-ring protein from Pseudomonas fluorescens (strain ATCC BAA-477 / NRRL B-23932 / Pf-5).